A 204-amino-acid chain; its full sequence is MAGSKQIFGADELDLVANYLQAGGVLAYPSESVWGLGCDAFNTDAINQIINLKHRDIGKGLIVLTDAAERLKSLIDVSHETSLLDYMQNFSDEFTHKHSRALTWLMPIQSSVLPSVLIGSHDTLAVRITTHPLLKDLCHALISPTNPYGFLVSTSCNLSKSTPAKNLTQAMGYFGDQIAYLDTDGLGFAQPSCIKDLLAGHILR.

A YrdC-like domain is found at Ala10–Arg204.

It belongs to the SUA5 family. TsaC subfamily.

It localises to the cytoplasm. It catalyses the reaction L-threonine + hydrogencarbonate + ATP = L-threonylcarbamoyladenylate + diphosphate + H2O. Functionally, required for the formation of a threonylcarbamoyl group on adenosine at position 37 (t(6)A37) in tRNAs that read codons beginning with adenine. Catalyzes the conversion of L-threonine, HCO(3)(-)/CO(2) and ATP to give threonylcarbamoyl-AMP (TC-AMP) as the acyladenylate intermediate, with the release of diphosphate. This chain is Threonylcarbamoyl-AMP synthase, found in Moraxella catarrhalis (strain BBH18).